Consider the following 605-residue polypeptide: Microtubule-associated protein VP10 (605 aa).

As to quaternary structure, interacts with VP1.

Its subcellular location is the virion. The protein resides in the host cytoplasm. The protein localises to the host cytoskeleton. Its function is as follows. Minor inner capsid component. Displays NTPase and RNA 5'-triphosphatase (RTPase) activities. May function as a cofactor of polymerase VP1. Associates with microtubules and plays a role in the formation, structural organization and morphology of viral inclusions, where the assembly of cores and the replication of viral RNA occur. This is Microtubule-associated protein VP10 from Colorado tick fever virus (strain USA/Florio N-7180) (CTFV).